Consider the following 139-residue polypeptide: Small ribosomal subunit protein uS12 (139 aa).

The interval 1–55 (MPTINQLIRKGRKAKVKKSDSPALNKGYNSFKKVQTDLSSPQKRGVCTRVGTMTP) is disordered. A compositionally biased stretch (polar residues) spans 32–42 (KKVQTDLSSPQ).

The protein belongs to the universal ribosomal protein uS12 family. As to quaternary structure, part of the 30S ribosomal subunit. Contacts proteins S8 and S17. May interact with IF1 in the 30S initiation complex.

In terms of biological role, with S4 and S5 plays an important role in translational accuracy. Its function is as follows. Interacts with and stabilizes bases of the 16S rRNA that are involved in tRNA selection in the A site and with the mRNA backbone. Located at the interface of the 30S and 50S subunits, it traverses the body of the 30S subunit contacting proteins on the other side and probably holding the rRNA structure together. The combined cluster of proteins S8, S12 and S17 appears to hold together the shoulder and platform of the 30S subunit. This chain is Small ribosomal subunit protein uS12, found in Halalkalibacterium halodurans (strain ATCC BAA-125 / DSM 18197 / FERM 7344 / JCM 9153 / C-125) (Bacillus halodurans).